We begin with the raw amino-acid sequence, 772 residues long: Heat shock protein 88 (772 aa).

2 disordered regions span residues 496–519 (TAAP…AEEK) and 729–772 (LGKP…DILD). Over residues 497-513 (AAPAETPAETPANGEAA) the composition is skewed to low complexity. A compositionally biased stretch (basic and acidic residues) spans 735–772 (KPVEVPKEEPKDTPMESKDAPAEEPVATKDQKMDDILD).

Belongs to the heat shock protein 70 family.

Functionally, may function in protein folding and assembly, and disassembly of protein complexes. This Dictyostelium discoideum (Social amoeba) protein is Heat shock protein 88 (hspH).